The primary structure comprises 122 residues: UPF0231 protein VSAL_I2591 (122 aa).

It belongs to the UPF0231 family.

The chain is UPF0231 protein VSAL_I2591 from Aliivibrio salmonicida (strain LFI1238) (Vibrio salmonicida (strain LFI1238)).